The primary structure comprises 118 residues: UPF0342 protein BCE_0953 (118 aa).

This sequence belongs to the UPF0342 family.

The chain is UPF0342 protein BCE_0953 from Bacillus cereus (strain ATCC 10987 / NRS 248).